The sequence spans 456 residues: Glycine--tRNA ligase (456 aa).

Substrate is bound by residues Arg-98 and Glu-168. Residues 200 to 202, 210 to 215, 285 to 286, and 329 to 332 each bind ATP; these read RNE, FRTREF, EL, and GVER. 215–219 is a substrate binding site; it reads FEQME. 325-329 contacts substrate; that stretch reads EPSVG.

It belongs to the class-II aminoacyl-tRNA synthetase family. Homodimer.

The protein resides in the cytoplasm. The catalysed reaction is tRNA(Gly) + glycine + ATP = glycyl-tRNA(Gly) + AMP + diphosphate. In terms of biological role, catalyzes the attachment of glycine to tRNA(Gly). The polypeptide is Glycine--tRNA ligase (Mycoplasma capricolum subsp. capricolum (strain California kid / ATCC 27343 / NCTC 10154)).